We begin with the raw amino-acid sequence, 232 residues long: Expansin-YoaJ (232 aa).

An N-terminal signal peptide occupies residues 1–25 (MKKIMSAFVGMVLLTIFCFSPQASA). In terms of domain architecture, Expansin-like EG45 spans 58 to 127 (ITAINPADLN…MKDGKINIKW (70 aa)).

It is found in the secreted. The protein localises to the cell wall. Its function is as follows. May promote colonization of plant roots. May cause loosening and extension of plant cell walls by disrupting non-covalent bonding between cellulose microfibrils and matrix glucans. Has very low expansin activity (in vitro). No enzymatic activity has been found. Binds to peptidoglycan and to plant cell walls. The protein is Expansin-YoaJ (yoaJ) of Bacillus subtilis (strain 168).